A 406-amino-acid polypeptide reads, in one-letter code: MLLTLYACLLWLSTSGLWTSQAKDPDSDLSTRSRHRNLAPNNVDFAFALYKHLVASAPGKDVFLSPVSISTALAMLSLGASGYTREQLLQGLGFNLTETPEAEIHQDFQHLHSLLKGSNITSEMTMGNALFLDRSLELLESFSTGSKHYYGLEALAADFQDWAGASRQINEYIKNKTQGKIVDLFLEQDSSAMLILINYIFFKGTWTHSFPPESTREENFYVNETATVKVPMMFQSRAMKYLNDSLLPCQLVQLEYTGNETAFFILPVKGEMDTVIAGLSRDTIQRWSKSLIPSQVDLYVPKVSISGAYDLGSILGDMGIVDLLSHPTHFSGITQNALPKMSKVVHKAVLQFDEKGMEAAAPTTRGRSLHAAPKPVTVHFNRPFIVMVFDHFTWSSLFLGKIVNLT.

The signal sequence occupies residues 1–22; it reads MLLTLYACLLWLSTSGLWTSQA. N-linked (GlcNAc...) asparagine glycosylation is found at asparagine 95, asparagine 119, and asparagine 223. Glutamine 253 lines the cortisol pocket. Asparagine 259 is a glycosylation site (N-linked (GlcNAc...) asparagine). Glutamine 285 and tryptophan 394 together coordinate cortisol.

It belongs to the serpin family.

The protein resides in the secreted. In terms of biological role, major transport protein for glucocorticoids and progestins in the blood of almost all vertebrate species. This is Corticosteroid-binding globulin (Serpina6) from Sus scrofa (Pig).